A 177-amino-acid polypeptide reads, in one-letter code: Large ribosomal subunit protein uL6 (177 aa).

It belongs to the universal ribosomal protein uL6 family. As to quaternary structure, part of the 50S ribosomal subunit.

Functionally, this protein binds to the 23S rRNA, and is important in its secondary structure. It is located near the subunit interface in the base of the L7/L12 stalk, and near the tRNA binding site of the peptidyltransferase center. The sequence is that of Large ribosomal subunit protein uL6 from Idiomarina loihiensis (strain ATCC BAA-735 / DSM 15497 / L2-TR).